Consider the following 816-residue polypeptide: Protein EFR3 homolog B (816 aa).

The span at 206–219 shows a compositional bias: polar residues; that stretch reads SGEGTESRSPSPLQ. Residues 206 to 230 are disordered; it reads SGEGTESRSPSPLQASEKEKESPAE. A compositionally biased stretch (basic and acidic residues) spans 221–230; sequence SEKEKESPAE.

This sequence belongs to the EFR3 family. As to quaternary structure, component of a phosphatidylinositol 4-kinase (PI4K) complex. In terms of processing, palmitoylated at its N-terminus, anchoring the protein to the plasma membrane.

The protein resides in the cell membrane. Component of a complex required to localize phosphatidylinositol 4-kinase (PI4K) to the plasma membrane. The complex acts as a regulator of phosphatidylinositol 4-phosphate (PtdIns(4)P) synthesis. In the complex, efr3b probably acts as the membrane-anchoring component. This is Protein EFR3 homolog B (efr3b) from Danio rerio (Zebrafish).